A 175-amino-acid polypeptide reads, in one-letter code: Translation initiation factor IF-3 (175 aa).

Belongs to the IF-3 family. In terms of assembly, monomer.

The protein localises to the cytoplasm. Its function is as follows. IF-3 binds to the 30S ribosomal subunit and shifts the equilibrium between 70S ribosomes and their 50S and 30S subunits in favor of the free subunits, thus enhancing the availability of 30S subunits on which protein synthesis initiation begins. This is Translation initiation factor IF-3 from Chromobacterium violaceum (strain ATCC 12472 / DSM 30191 / JCM 1249 / CCUG 213 / NBRC 12614 / NCIMB 9131 / NCTC 9757 / MK).